We begin with the raw amino-acid sequence, 336 residues long: Ketol-acid reductoisomerase (NADP(+)) (336 aa).

The KARI N-terminal Rossmann domain maps to 2–181 (AKVYYEKDVM…GATRAGVLET (180 aa)). Residues 25-28 (YGSQ), R48, S52, and 82-85 (DELQ) each bind NADP(+). H107 is an active-site residue. G133 provides a ligand contact to NADP(+). The KARI C-terminal knotted domain occupies 182-327 (TFKEETETDL…RQLREMMPFV (146 aa)). Positions 190, 194, 226, and 230 each coordinate Mg(2+). Position 251 (S251) interacts with substrate.

Belongs to the ketol-acid reductoisomerase family. It depends on Mg(2+) as a cofactor.

It carries out the reaction (2R)-2,3-dihydroxy-3-methylbutanoate + NADP(+) = (2S)-2-acetolactate + NADPH + H(+). It catalyses the reaction (2R,3R)-2,3-dihydroxy-3-methylpentanoate + NADP(+) = (S)-2-ethyl-2-hydroxy-3-oxobutanoate + NADPH + H(+). The protein operates within amino-acid biosynthesis; L-isoleucine biosynthesis; L-isoleucine from 2-oxobutanoate: step 2/4. It participates in amino-acid biosynthesis; L-valine biosynthesis; L-valine from pyruvate: step 2/4. Involved in the biosynthesis of branched-chain amino acids (BCAA). Catalyzes an alkyl-migration followed by a ketol-acid reduction of (S)-2-acetolactate (S2AL) to yield (R)-2,3-dihydroxy-isovalerate. In the isomerase reaction, S2AL is rearranged via a Mg-dependent methyl migration to produce 3-hydroxy-3-methyl-2-ketobutyrate (HMKB). In the reductase reaction, this 2-ketoacid undergoes a metal-dependent reduction by NADPH to yield (R)-2,3-dihydroxy-isovalerate. The chain is Ketol-acid reductoisomerase (NADP(+)) from Bacillus cytotoxicus (strain DSM 22905 / CIP 110041 / 391-98 / NVH 391-98).